The chain runs to 143 residues: 1,4-dihydroxy-2-naphthoyl-CoA hydrolase (143 aa).

Asp-14 is a catalytic residue.

It belongs to the 4-hydroxybenzoyl-CoA thioesterase family. DHNA-CoA hydrolase subfamily.

The catalysed reaction is 1,4-dihydroxy-2-naphthoyl-CoA + H2O = 1,4-dihydroxy-2-naphthoate + CoA + H(+). It functions in the pathway cofactor biosynthesis; phylloquinone biosynthesis. Its pathway is quinol/quinone metabolism; 1,4-dihydroxy-2-naphthoate biosynthesis; 1,4-dihydroxy-2-naphthoate from chorismate: step 7/7. Functionally, catalyzes the hydrolysis of 1,4-dihydroxy-2-naphthoyl-CoA (DHNA-CoA) to 1,4-dihydroxy-2-naphthoate (DHNA), a reaction involved in phylloquinone (vitamin K1) biosynthesis. This chain is 1,4-dihydroxy-2-naphthoyl-CoA hydrolase, found in Gloeothece citriformis (strain PCC 7424) (Cyanothece sp. (strain PCC 7424)).